A 284-amino-acid chain; its full sequence is D-tagatose-1,6-bisphosphate aldolase subunit GatY (284 aa).

Catalysis depends on Asp-82, which acts as the Proton donor. Positions 83 and 180 each coordinate Zn(2+). A dihydroxyacetone phosphate-binding site is contributed by Gly-181. His-208 contributes to the Zn(2+) binding site. Residues 209 to 211 (GAS) and 230 to 233 (NVAT) each bind dihydroxyacetone phosphate.

The protein belongs to the class II fructose-bisphosphate aldolase family. TagBP aldolase GatY subfamily. As to quaternary structure, forms a complex with GatZ. It depends on Zn(2+) as a cofactor.

The enzyme catalyses D-tagatofuranose 1,6-bisphosphate = D-glyceraldehyde 3-phosphate + dihydroxyacetone phosphate. Its pathway is carbohydrate metabolism; D-tagatose 6-phosphate degradation; D-glyceraldehyde 3-phosphate and glycerone phosphate from D-tagatose 6-phosphate: step 2/2. Its function is as follows. Catalytic subunit of the tagatose-1,6-bisphosphate aldolase GatYZ, which catalyzes the reversible aldol condensation of dihydroxyacetone phosphate (DHAP or glycerone-phosphate) with glyceraldehyde 3-phosphate (G3P) to produce tagatose 1,6-bisphosphate (TBP). Requires GatZ subunit for full activity and stability. Is involved in the catabolism of galactitol. The sequence is that of D-tagatose-1,6-bisphosphate aldolase subunit GatY from Shigella dysenteriae serotype 1 (strain Sd197).